The sequence spans 168 residues: DNA damage-inducible transcript 3 protein (168 aa).

Residues 10–18 (FGALSSWEL) form an interaction with TRIB3 region. Residues 10 to 26 (FGALSSWELEAWYEDLQ) are N-terminal. 4 positions are modified to phosphoserine; by CK2: S14, S15, S30, and S31. A disordered region spans residues 31–141 (SDENRGTCVS…QLAEENERLK (111 aa)). Positions 76 to 90 (SQSPCSPESSQSSLA) are enriched in low complexity. Residues S78 and S81 each carry the phosphoserine; by MAPK14 modification. Residues 98-161 (QGRTRKRKQS…EATRRALIDR (64 aa)) form the bZIP domain. The interval 100-129 (RTRKRKQSGQSPARAGKQRMKEKEQENERK) is basic motif. Residues 118–141 (RMKEKEQENERKVAQLAEENERLK) show a composition bias toward basic and acidic residues. The segment at 133 to 147 (LAEENERLKQEIERL) is leucine-zipper.

The protein belongs to the bZIP family. Heterodimer. Interacts with TCF7L2/TCF4, EP300/P300, HDAC1, HDAC5 and HDAC6. Interacts with TRIB3 which blocks its association with EP300/P300. Interacts with FOXO3, CEBPB and ATF4. Post-translationally, ubiquitinated, leading to its degradation by the proteasome. Phosphorylation at serine residues by MAPK14 enhances its transcriptional activation activity while phosphorylation at serine residues by CK2 inhibits its transcriptional activation activity.

The protein localises to the cytoplasm. Its subcellular location is the nucleus. Multifunctional transcription factor in ER stress response. Plays an essential role in the response to a wide variety of cell stresses and induces cell cycle arrest and apoptosis in response to ER stress. Plays a dual role both as an inhibitor of CCAAT/enhancer-binding protein (C/EBP) function and as an activator of other genes. Acts as a dominant-negative regulator of C/EBP-induced transcription: dimerizes with members of the C/EBP family, impairs their association with C/EBP binding sites in the promoter regions, and inhibits the expression of C/EBP regulated genes. Positively regulates the transcription of TRIB3, IL6, IL8, IL23, TNFRSF10B/DR5, PPP1R15A/GADD34, BBC3/PUMA, BCL2L11/BIM and ERO1L. Negatively regulates; expression of BCL2 and MYOD1, ATF4-dependent transcriptional activation of asparagine synthetase (ASNS), CEBPA-dependent transcriptional activation of hepcidin (HAMP) and CEBPB-mediated expression of peroxisome proliferator-activated receptor gamma (PPARG). Inhibits the canonical Wnt signaling pathway by binding to TCF7L2/TCF4, impairing its DNA-binding properties and repressing its transcriptional activity. Plays a regulatory role in the inflammatory response through the induction of caspase-11 (CASP4/CASP11) which induces the activation of caspase-1 (CASP1) and both these caspases increase the activation of pro-IL1B to mature IL1B which is involved in the inflammatory response. In Bos taurus (Bovine), this protein is DNA damage-inducible transcript 3 protein (DDIT3).